A 521-amino-acid chain; its full sequence is HTH-type transcriptional regulatory protein TyrR (521 aa).

The ACT domain occupies 2-72; that stretch reads RLEVFCQDRI…GVTDVRTVPY (71 aa). The PAS domain maps to 78–120; sequence EHRVLSALLVAMPEPVFSVDLRTKVELANPAAQNLFNLDENKI. Positions 207 to 436 constitute a Sigma-54 factor interaction domain; it reads IVAVTPRMRQ…LKNALYRALT (230 aa). ATP-binding positions include 235-242 and 298-307; these read GDTGTGKD and ANGGSVLLDE. A DNA-binding region (H-T-H motif) is located at residues 489 to 509; it reads STRKLAKRLGVSHTAIANKLR.

In terms of assembly, homodimer. In presence of tyrosine (or high concentrations of phenylalanine or tryptophan) and ATP, it self-associates to form an hexamer.

The protein localises to the cytoplasm. Its function is as follows. Dual transcriptional regulator of the TyrR regulon, which includes a number of genes coding for proteins involved in the biosynthesis or transport of the three aromatic amino acids, phenylalanine, tyrosine and tryptophan. These three aromatic amino acids act as effectors which bind to the TyrR protein to form an active regulatory protein. Acts by binding specifically to TyrR boxes in the promoter region of the target genes. This Enterobacter agglomerans (Erwinia herbicola) protein is HTH-type transcriptional regulatory protein TyrR.